Consider the following 278-residue polypeptide: Shikimate dehydrogenase (NADP(+)) (278 aa).

Shikimate is bound by residues 19 to 21 and Thr66; that span reads SRS. Lys70 acts as the Proton acceptor in catalysis. Shikimate contacts are provided by Asn91 and Asp106. Residues 129 to 133 and Phe221 contribute to the NADP(+) site; that span reads GAGGA. Residue Tyr223 participates in shikimate binding. Gly242 is a binding site for NADP(+).

This sequence belongs to the shikimate dehydrogenase family. As to quaternary structure, homodimer.

It carries out the reaction shikimate + NADP(+) = 3-dehydroshikimate + NADPH + H(+). It participates in metabolic intermediate biosynthesis; chorismate biosynthesis; chorismate from D-erythrose 4-phosphate and phosphoenolpyruvate: step 4/7. In terms of biological role, involved in the biosynthesis of the chorismate, which leads to the biosynthesis of aromatic amino acids. Catalyzes the reversible NADPH linked reduction of 3-dehydroshikimate (DHSA) to yield shikimate (SA). This Anaeromyxobacter dehalogenans (strain 2CP-C) protein is Shikimate dehydrogenase (NADP(+)).